A 498-amino-acid polypeptide reads, in one-letter code: Glutamyl-tRNA(Gln) amidotransferase subunit A (498 aa).

Catalysis depends on charge relay system residues K85 and S160. The active-site Acyl-ester intermediate is the S184.

The protein belongs to the amidase family. GatA subfamily. As to quaternary structure, heterotrimer of A, B and C subunits.

The catalysed reaction is L-glutamyl-tRNA(Gln) + L-glutamine + ATP + H2O = L-glutaminyl-tRNA(Gln) + L-glutamate + ADP + phosphate + H(+). Functionally, allows the formation of correctly charged Gln-tRNA(Gln) through the transamidation of misacylated Glu-tRNA(Gln) in organisms which lack glutaminyl-tRNA synthetase. The reaction takes place in the presence of glutamine and ATP through an activated gamma-phospho-Glu-tRNA(Gln). This is Glutamyl-tRNA(Gln) amidotransferase subunit A from Mycolicibacterium vanbaalenii (strain DSM 7251 / JCM 13017 / BCRC 16820 / KCTC 9966 / NRRL B-24157 / PYR-1) (Mycobacterium vanbaalenii).